The primary structure comprises 145 residues: Hemoglobin subunit beta (145 aa).

The Globin domain maps to 1–145 (MLTAEEKAAV…VANALAHRYH (145 aa)). A Phosphothreonine modification is found at T11. A Phosphoserine modification is found at S43. An N6-acetyllysine modification is found at K58. H62 serves as a coordination point for heme b. An N6-acetyllysine modification is found at K81. H91 is a binding site for heme b. Residue C92 is modified to S-nitrosocysteine.

Belongs to the globin family. Heterotetramer of two alpha chains and two beta chains. As to expression, red blood cells.

In terms of biological role, involved in oxygen transport from the lung to the various peripheral tissues. Its function is as follows. Functions as an endogenous inhibitor of enkephalin-degrading enzymes such as DPP3, and may thereby play a role as a regulator of pain and inflammation. The chain is Hemoglobin subunit beta (HBB) from Bos taurus (Bovine).